A 1879-amino-acid chain; its full sequence is Protein TIC 214 (1879 aa).

A run of 6 helical transmembrane segments spans residues 18–38 (IINS…FSIG), 67–87 (FITG…HLAL), 90–110 (PHTI…WNNH), 127–147 (LSIQ…HFIL), 175–195 (VGWL…LVWI), and 218–238 (IFSI…PSPI). The disordered stretch occupies residues 243 to 291 (LKETEERGESEEERDVEKTSETKGTKQEQEGSTEEDPSPSLFSEEKEDP). The segment covering 257–271 (DVEKTSETKGTKQEQ) has biased composition (basic and acidic residues).

It belongs to the TIC214 family. Part of the Tic complex.

Its subcellular location is the plastid. The protein localises to the chloroplast inner membrane. Its function is as follows. Involved in protein precursor import into chloroplasts. May be part of an intermediate translocation complex acting as a protein-conducting channel at the inner envelope. This chain is Protein TIC 214, found in Morus indica (Mulberry).